We begin with the raw amino-acid sequence, 446 residues long: Probable inactive lipase MT1628 (446 aa).

The protein belongs to the AB hydrolase superfamily. Lipase family.

The polypeptide is Probable inactive lipase MT1628 (Mycobacterium tuberculosis (strain CDC 1551 / Oshkosh)).